A 198-amino-acid polypeptide reads, in one-letter code: Thymidine kinase (198 aa).

Residues 9–16 and 85–88 each bind ATP; these read GTMNSGKS and DEAQ. Residue Glu86 is the Proton acceptor of the active site. Cys143, Cys146, Cys180, and His183 together coordinate Zn(2+).

The protein belongs to the thymidine kinase family. Homotetramer.

It is found in the cytoplasm. The catalysed reaction is thymidine + ATP = dTMP + ADP + H(+). This Streptococcus thermophilus (strain ATCC BAA-250 / LMG 18311) protein is Thymidine kinase.